Consider the following 1595-residue polypeptide: Pentafunctional AROM polypeptide (1595 aa).

The interval 1–384 is 3-dehydroquinate synthase; sequence MGVPTKISIL…HEPRASTVSN (384 aa). NAD(+) contacts are provided by residues 44–46, 81–84, 114–116, and D119; these read DTN, ESSK, and GGV. R130 is a 7-phospho-2-dehydro-3-deoxy-D-arabino-heptonate binding site. 139–140 lines the NAD(+) pocket; sequence TT. 7-phospho-2-dehydro-3-deoxy-D-arabino-heptonate-binding residues include D146 and K152. K161 contributes to the NAD(+) binding site. N162 provides a ligand contact to 7-phospho-2-dehydro-3-deoxy-D-arabino-heptonate. NAD(+) contacts are provided by residues 179–182 and N190; that span reads FLNT. Residue E194 coordinates Zn(2+). Residues 194 to 197 and K250 contribute to the 7-phospho-2-dehydro-3-deoxy-D-arabino-heptonate site; that span reads EVIK. The active-site Proton acceptor; for 3-dehydroquinate synthase activity is the E260. 7-phospho-2-dehydro-3-deoxy-D-arabino-heptonate-binding positions include 264–268 and H271; that span reads RNLLN. Residue H271 coordinates Zn(2+). H275 (proton acceptor; for 3-dehydroquinate synthase activity) is an active-site residue. 7-phospho-2-dehydro-3-deoxy-D-arabino-heptonate is bound by residues H287 and K356. Residue H287 coordinates Zn(2+). Positions 397-842 are EPSP synthase; the sequence is VSPGVPKGLD…WDSLAQTFKV (446 aa). The active-site For EPSP synthase activity is C824. Residues 866–1057 form a shikimate kinase region; it reads ASIFIIGMRG…RRKENTFFVS (192 aa). Position 872 to 879 (872 to 879) interacts with ATP; the sequence is GMRGAGKT. Residues 1058–1278 form a 3-dehydroquinase region; it reads LTLPDLGLAA…AAPGQLSARE (221 aa). The active-site Proton acceptor; for 3-dehydroquinate dehydratase activity is H1181. The active-site Schiff-base intermediate with substrate; for 3-dehydroquinate dehydratase activity is K1209. The shikimate dehydrogenase stretch occupies residues 1291-1595; it reads AKKFAVIGNP…MGVLPSEDIS (305 aa).

The protein in the N-terminal section; belongs to the sugar phosphate cyclases superfamily. Dehydroquinate synthase family. This sequence in the 2nd section; belongs to the EPSP synthase family. In the 3rd section; belongs to the shikimate kinase family. It in the 4th section; belongs to the type-I 3-dehydroquinase family. The protein in the C-terminal section; belongs to the shikimate dehydrogenase family. In terms of assembly, homodimer. It depends on Zn(2+) as a cofactor.

The protein localises to the cytoplasm. It carries out the reaction 7-phospho-2-dehydro-3-deoxy-D-arabino-heptonate = 3-dehydroquinate + phosphate. It catalyses the reaction 3-dehydroquinate = 3-dehydroshikimate + H2O. The enzyme catalyses shikimate + NADP(+) = 3-dehydroshikimate + NADPH + H(+). The catalysed reaction is shikimate + ATP = 3-phosphoshikimate + ADP + H(+). It carries out the reaction 3-phosphoshikimate + phosphoenolpyruvate = 5-O-(1-carboxyvinyl)-3-phosphoshikimate + phosphate. The protein operates within metabolic intermediate biosynthesis; chorismate biosynthesis; chorismate from D-erythrose 4-phosphate and phosphoenolpyruvate: step 2/7. Its pathway is metabolic intermediate biosynthesis; chorismate biosynthesis; chorismate from D-erythrose 4-phosphate and phosphoenolpyruvate: step 3/7. It participates in metabolic intermediate biosynthesis; chorismate biosynthesis; chorismate from D-erythrose 4-phosphate and phosphoenolpyruvate: step 4/7. It functions in the pathway metabolic intermediate biosynthesis; chorismate biosynthesis; chorismate from D-erythrose 4-phosphate and phosphoenolpyruvate: step 5/7. The protein operates within metabolic intermediate biosynthesis; chorismate biosynthesis; chorismate from D-erythrose 4-phosphate and phosphoenolpyruvate: step 6/7. In terms of biological role, the AROM polypeptide catalyzes 5 consecutive enzymatic reactions in prechorismate polyaromatic amino acid biosynthesis. In Ajellomyces capsulatus (strain H143) (Darling's disease fungus), this protein is Pentafunctional AROM polypeptide.